A 118-amino-acid chain; its full sequence is Cytochrome b-c1 complex subunit 7 (118 aa).

Residues 1 to 32 (MVHLTKTLRFINNPGFRKFYYGLQGYNKYGLY) form an igE-binding. Immunodominant epitope; induces specific IgE antibody production in mice. Causes degranulation of rat basophilic leukemia (RBL) cells and the release of beta-hexosaminidase from them region.

Belongs to the UQCRB/QCR7 family. In terms of assembly, component of the ubiquinol-cytochrome c oxidoreductase (cytochrome b-c1 complex, complex III, CIII), a multisubunit enzyme composed of 3 respiratory subunits cytochrome b, cytochrome c1 and Rieske protein, 2 core protein subunits, and additional low-molecular weight protein subunits. The complex exists as an obligatory dimer and forms supercomplexes (SCs) in the inner mitochondrial membrane with cytochrome c oxidase (complex IV, CIV).

It is found in the mitochondrion inner membrane. In terms of biological role, component of the ubiquinol-cytochrome c oxidoreductase, a multisubunit transmembrane complex that is part of the mitochondrial electron transport chain which drives oxidative phosphorylation. The respiratory chain contains 3 multisubunit complexes succinate dehydrogenase (complex II, CII), ubiquinol-cytochrome c oxidoreductase (cytochrome b-c1 complex, complex III, CIII) and cytochrome c oxidase (complex IV, CIV), that cooperate to transfer electrons derived from NADH and succinate to molecular oxygen, creating an electrochemical gradient over the inner membrane that drives transmembrane transport and the ATP synthase. The cytochrome b-c1 complex catalyzes electron transfer from ubiquinol to cytochrome c, linking this redox reaction to translocation of protons across the mitochondrial inner membrane, with protons being carried across the membrane as hydrogens on the quinol. In the process called Q cycle, 2 protons are consumed from the matrix, 4 protons are released into the intermembrane space and 2 electrons are passed to cytochrome c. The polypeptide is Cytochrome b-c1 complex subunit 7 (Dermatophagoides pteronyssinus (European house dust mite)).